Consider the following 79-residue polypeptide: Probable [Fe-S]-dependent transcriptional repressor (79 aa).

Residues C56, C61, C64, and C71 each coordinate iron-sulfur cluster.

This sequence belongs to the FeoC family.

In terms of biological role, may function as a transcriptional regulator that controls feoABC expression. In Klebsiella pneumoniae (strain 342), this protein is Probable [Fe-S]-dependent transcriptional repressor.